Reading from the N-terminus, the 66-residue chain is U1-theraphotoxin-Cg1d 1 (66 aa).

The N-terminal stretch at 1–21 (MKMSALFVIFGLALLFCNSFA) is a signal peptide. The propeptide occupies 22–29 (AELKATGR). Intrachain disulfides connect C31/C46, C38/C51, and C45/C58. P63 bears the Proline amide mark.

The protein belongs to the neurotoxin 10 (Hwtx-1) family. 46 (Jztx-7/10/12) subfamily. Expressed by the venom gland.

The protein resides in the secreted. Probable ion channel inhibitor. In Chilobrachys guangxiensis (Chinese earth tiger tarantula), this protein is U1-theraphotoxin-Cg1d 1.